We begin with the raw amino-acid sequence, 55 residues long: uncharacterized protein (55 aa).

Helical transmembrane passes span 2–19 and 24–46; these read VIGLFVLSIVMLIVSFIA and LLSIMISFLLFTSAVVLAMFRYF.

Its subcellular location is the cell membrane. This is an uncharacterized protein from Alkalihalophilus pseudofirmus (strain ATCC BAA-2126 / JCM 17055 / OF4) (Bacillus pseudofirmus).